The following is a 158-amino-acid chain: NAD(P)H-quinone oxidoreductase subunit N (158 aa).

The protein belongs to the complex I NdhN subunit family. As to quaternary structure, NDH-1 can be composed of about 15 different subunits; different subcomplexes with different compositions have been identified which probably have different functions.

The protein localises to the cellular thylakoid membrane. The enzyme catalyses a plastoquinone + NADH + (n+1) H(+)(in) = a plastoquinol + NAD(+) + n H(+)(out). The catalysed reaction is a plastoquinone + NADPH + (n+1) H(+)(in) = a plastoquinol + NADP(+) + n H(+)(out). In terms of biological role, NDH-1 shuttles electrons from an unknown electron donor, via FMN and iron-sulfur (Fe-S) centers, to quinones in the respiratory and/or the photosynthetic chain. The immediate electron acceptor for the enzyme in this species is believed to be plastoquinone. Couples the redox reaction to proton translocation, and thus conserves the redox energy in a proton gradient. Cyanobacterial NDH-1 also plays a role in inorganic carbon-concentration. The sequence is that of NAD(P)H-quinone oxidoreductase subunit N from Gloeothece citriformis (strain PCC 7424) (Cyanothece sp. (strain PCC 7424)).